The primary structure comprises 160 residues: Succinate dehydrogenase assembly factor 2-A, mitochondrial (160 aa).

The N-terminal 30 residues, 1–30 (MLRQLKLTLNISRWIFMPWQRQASASSSQV), are a transit peptide targeting the mitochondrion.

This sequence belongs to the SDHAF2 family. As to quaternary structure, interacts with the flavoprotein subunit within the SDH catalytic dimer.

It localises to the mitochondrion matrix. Functionally, plays an essential role in the assembly of succinate dehydrogenase (SDH), an enzyme complex (also referred to as respiratory complex II) that is a component of both the tricarboxylic acid (TCA) cycle and the mitochondrial electron transport chain, and which couples the oxidation of succinate to fumarate with the reduction of ubiquinone (coenzyme Q) to ubiquinol. Required for flavinylation (covalent attachment of FAD) of the flavoprotein subunit of the SDH catalytic dimer. The protein is Succinate dehydrogenase assembly factor 2-A, mitochondrial of Drosophila persimilis (Fruit fly).